The primary structure comprises 114 residues: Fluoride-specific ion channel FluC 2 (114 aa).

A run of 4 helical transmembrane segments spans residues 3–23, 31–51, 57–77, and 92–112; these read YVIIGGAVGACLRFAVSECWL, LMTAVFVINISGCAMLGWILA, GIELLFISMLGGFTTFSTFCM, and MIYLVISIVGSLFGFLFGWNV. Residues G67 and T70 each coordinate Na(+).

This sequence belongs to the fluoride channel Fluc/FEX (TC 1.A.43) family.

It is found in the cell membrane. It catalyses the reaction fluoride(in) = fluoride(out). Its activity is regulated as follows. Na(+) is not transported, but it plays an essential structural role and its presence is essential for fluoride channel function. Functionally, fluoride-specific ion channel. Important for reducing fluoride concentration in the cell, thus reducing its toxicity. The sequence is that of Fluoride-specific ion channel FluC 2 from Shouchella clausii (strain KSM-K16) (Alkalihalobacillus clausii).